Consider the following 317-residue polypeptide: Melanocyte-stimulating hormone receptor (317 aa).

At 1 to 37 (MPMQEPQRRLLGPFNSTRTGAPHLELSANQTGPWCLH) the chain is on the extracellular side. N-linked (GlcNAc...) asparagine glycans are attached at residues asparagine 15 and asparagine 29. The chain crosses the membrane as a helical span at residues 38 to 63 (VSIPDGLFLSLGLVSLVENVLVVISI). Topologically, residues 64 to 72 (AKNQNLHSP) are cytoplasmic. A helical transmembrane segment spans residues 73–93 (MYYFICCLALSDLLVSVSIVL). At 94 to 118 (ETTLILVLEAGALATRVTVVQQLDN) the chain is on the extracellular side. A helical membrane pass occupies residues 119-140 (VIDVLICASMVSSLCFLGAIAV). The Cytoplasmic portion of the chain corresponds to 141–163 (DRYISIFYALRYHSIVTLPRARW). Residues 164 to 183 (AIVAIWVASISSSTLFVAYY) form a helical membrane-spanning segment. Topologically, residues 184–191 (NHTAVLLC) are extracellular. A helical membrane pass occupies residues 192-211 (LVTFFLATLALMVVLYVHML). Topologically, residues 212–240 (ARAHQHAQAIAQLHKRQHLVHQGFRLKGA) are cytoplasmic. A helical transmembrane segment spans residues 241 to 266 (ATLTILLGIFFLCWGPFFLYLTLIVL). Residues 267–279 (CPKHPTCGCFFKN) are Extracellular-facing. The helical transmembrane segment at 280–300 (LNLFLALIIFNSIVDPLIYAF) threads the bilayer. The Cytoplasmic portion of the chain corresponds to 301 to 317 (RSQELRMTLKEVLLCSW). A lipid anchor (S-palmitoyl cysteine) is attached at cysteine 315.

Belongs to the G-protein coupled receptor 1 family. In terms of assembly, interacts with MGRN1, but does not undergo MGRN1-mediated ubiquitination; this interaction competes with GNAS-binding and thus inhibits agonist-induced cAMP production. Interacts with OPN3; the interaction results in a decrease in MC1R-mediated cAMP signaling and ultimately a decrease in melanin production in melanocytes.

The protein resides in the cell membrane. Its function is as follows. Receptor for MSH (alpha, beta and gamma) and ACTH. The activity of this receptor is mediated by G proteins which activate adenylate cyclase. Mediates melanogenesis, the production of eumelanin (black/brown) and phaeomelanin (red/yellow), via regulation of cAMP signaling in melanocytes. The chain is Melanocyte-stimulating hormone receptor (MC1R) from Chaetodipus penicillatus (Desert pocket mouse).